Consider the following 252-residue polypeptide: tRNA (guanine-N(1)-)-methyltransferase (252 aa).

S-adenosyl-L-methionine is bound by residues Gly-113 and 133–138; that span reads LGDYVL.

It belongs to the RNA methyltransferase TrmD family. Homodimer.

It is found in the cytoplasm. It catalyses the reaction guanosine(37) in tRNA + S-adenosyl-L-methionine = N(1)-methylguanosine(37) in tRNA + S-adenosyl-L-homocysteine + H(+). Its function is as follows. Specifically methylates guanosine-37 in various tRNAs. This Stenotrophomonas maltophilia (strain K279a) protein is tRNA (guanine-N(1)-)-methyltransferase.